A 391-amino-acid chain; its full sequence is NADH-quinone oxidoreductase subunit D (391 aa).

This sequence belongs to the complex I 49 kDa subunit family. NDH-1 is composed of 14 different subunits. Subunits NuoB, C, D, E, F, and G constitute the peripheral sector of the complex.

It localises to the cell inner membrane. It carries out the reaction a quinone + NADH + 5 H(+)(in) = a quinol + NAD(+) + 4 H(+)(out). In terms of biological role, NDH-1 shuttles electrons from NADH, via FMN and iron-sulfur (Fe-S) centers, to quinones in the respiratory chain. The immediate electron acceptor for the enzyme in this species is believed to be ubiquinone. Couples the redox reaction to proton translocation (for every two electrons transferred, four hydrogen ions are translocated across the cytoplasmic membrane), and thus conserves the redox energy in a proton gradient. This chain is NADH-quinone oxidoreductase subunit D, found in Rickettsia felis (strain ATCC VR-1525 / URRWXCal2) (Rickettsia azadi).